Here is a 283-residue protein sequence, read N- to C-terminus: MNFDKFIVIVTGLSGGGKTVTLRTLEDIGFFCVDNLPPPIVLEFLGMLNEYSSFKNIAIGIDIRVQQFLEKATELIKRIKDIYKIEVLFLEADDDTILLRYKETRRPHPLSTHYNDLHKAIKQERELLYPLRCLSDRIIDTSNLNPHELKFLIRSMYGAEKISPSITIISFGYKKGIPANADLIFDARFLPNPYFIPSLTDLNGKDKPVKDFVLKQNETIEFLTYIKNFLSFAVSGYKREGRAYVTIAIGCTGGRHRSVVLVEEIADYLRSLSLNPVVIHRDL.

Residue 12-19 participates in ATP binding; that stretch reads GLSGGGKT. 62 to 65 provides a ligand contact to GTP; it reads DIRV.

The protein belongs to the RapZ-like family.

Its function is as follows. Displays ATPase and GTPase activities. This chain is Nucleotide-binding protein THEYE_A0235, found in Thermodesulfovibrio yellowstonii (strain ATCC 51303 / DSM 11347 / YP87).